A 232-amino-acid chain; its full sequence is MSVCQTPIIVALDYPTRDAALKLADQLDPKLCRVKVGKELFTSCAAEIVGTLRDKGFEVFLDLKFHDIPNTTAMAVKAAAEMGVWMVNVHCSGGLRMMTACREVLEQRSGPKPLLIGVTVLTSMEREDLAGIGLDIEPQEQVLRLAALAQKAGLDGLVCSALEAQALKTAHPSLQLVTPGIRPAGSAQDDQRRILTPRQALDAGSDYLVIGRPISQAADPAKALADVVAEIA.

Residues Asp-13, Lys-35, 62-71, Thr-122, Arg-182, Gln-191, Gly-211, and Arg-212 each bind substrate; that span reads DLKFHDIPNT. Residue Lys-64 is the Proton donor of the active site.

The protein belongs to the OMP decarboxylase family. Type 1 subfamily. As to quaternary structure, homodimer.

It carries out the reaction orotidine 5'-phosphate + H(+) = UMP + CO2. It functions in the pathway pyrimidine metabolism; UMP biosynthesis via de novo pathway; UMP from orotate: step 2/2. Catalyzes the decarboxylation of orotidine 5'-monophosphate (OMP) to uridine 5'-monophosphate (UMP). This Pseudomonas fluorescens (strain SBW25) protein is Orotidine 5'-phosphate decarboxylase.